Consider the following 60-residue polypeptide: MSIAETNTTTEVAAPKKKMCCACPETKKVRDECIVANGEEKCAALIELHKVCLRKEGFDV.

Cu cation is bound by residues C20 and C21. The CHCH domain maps to 20-60; sequence CCACPETKKVRDECIVANGEEKCAALIELHKVCLRKEGFDV. 2 short sequence motifs (cx9C motif) span residues 23–33 and 42–52; these read CPETKKVRDEC and CAALIELHKVC. Disulfide bonds link C23-C52 and C33-C42.

Belongs to the COX17 family.

The protein localises to the mitochondrion intermembrane space. Functionally, copper chaperone for cytochrome c oxidase (COX). Binds two copper ions and deliver them to the Cu(A) site of COX. This is Cytochrome c oxidase copper chaperone (cox17) from Dictyostelium discoideum (Social amoeba).